The sequence spans 475 residues: uncharacterized protein (475 aa).

The chain crosses the membrane as a helical span at residues 7–28 (HVISIFETLGAYFINIFYNFLY). 3 N-linked (GlcNAc...) asparagine; by host glycosylation sites follow: asparagine 73, asparagine 83, and asparagine 195. Positions 183 to 233 (ELEETYARLSSYNRSLLHQIEELTSEKKSLLADLSTLRKKYEKRQSEYRRL) form a coiled coil. A compositionally biased stretch (polar residues) spans 295–305 (SQELTSKSPNN). The interval 295 to 324 (SQELTSKSPNNYPVPHSRTIVSKPPDNYPV) is disordered. Asparagine 450 and asparagine 460 each carry an N-linked (GlcNAc...) asparagine; by host glycan.

It belongs to the asfivirus B475L family.

Its subcellular location is the host membrane. This is an uncharacterized protein from Ornithodoros (relapsing fever ticks).